The primary structure comprises 352 residues: C-C chemokine receptor type 5 (352 aa).

The Extracellular portion of the chain corresponds to 1–30; the sequence is MDYQVSSPTYDIDYYTSEPCQKVNVKQIAA. Y3 bears the Sulfotyrosine mark. O-linked (GalNAc...) serine glycosylation is found at S6 and S7. Y10, Y14, and Y15 each carry sulfotyrosine. 2 disulfide bridges follow: C20-C269 and C101-C178. The helical transmembrane segment at 31-58 threads the bilayer; sequence RLLPPLYSLVFIFGFVGNILVVLILINC. Topologically, residues 59–68 are cytoplasmic; sequence KRLKSMTDIY. Residues 69–89 form a helical membrane-spanning segment; it reads LLNLAISDLFFLLTVPFWAHY. At 90–102 the chain is on the extracellular side; it reads AAAQWDFGNTMCQ. A helical transmembrane segment spans residues 103–124; sequence LLTGLYFIGFFSGIFFIILLTI. Residues 125–141 are Cytoplasmic-facing; that stretch reads DRYLAIVHAVFALKART. Residues 142–166 form a helical membrane-spanning segment; the sequence is VTFGVVTSVITWVVAVFASLPGIIF. The Extracellular segment spans residues 167–198; that stretch reads TRSQREGLHYTCSSHFPYSQYQFWKNFQTLKI. The chain crosses the membrane as a helical span at residues 199–218; it reads VILGLVLPLLVMVICYSGIL. At 219–235 the chain is on the cytoplasmic side; it reads KTLLRCRNEKKRHRAVR. A helical membrane pass occupies residues 236 to 260; it reads LIFTIMIVYFLFWAPYNIVLLLNTF. The Extracellular portion of the chain corresponds to 261 to 277; the sequence is QEFFGLNNCSSSNRLDQ. The helical transmembrane segment at 278–301 threads the bilayer; sequence AMQVTETLGMTHCCINPIIYAFVG. Residues 302-352 are Cytoplasmic-facing; sequence EKFRNYLLVFFQKHIAKRFCKCCSIFQQEAPERASSVYTRSTGEQETSVGL. 3 S-palmitoyl cysteine lipidation sites follow: C321, C323, and C324. Residues S336, S337, S342, and S349 each carry the phosphoserine; by BARK1 modification.

Belongs to the G-protein coupled receptor 1 family. As to quaternary structure, interacts with PRAF2. Efficient ligand binding to CCL3/MIP-1alpha and CCL4/MIP-1beta requires sulfation, O-glycosylation and sialic acid modifications. Glycosylation on Ser-6 is required for efficient binding of CCL4. Interacts with GRK2. Interacts with ARRB1 and ARRB2. Interacts with CNIH4. Interacts with S100A4; this interaction stimulates T-lymphocyte chemotaxis. Post-translationally, sulfated on at least 2 of the N-terminal tyrosines. Sulfation is required for efficient binding of the chemokines, CCL3 and CCL4. In terms of processing, palmitoylation in the C-terminal is important for cell surface expression. Phosphorylation on serine residues in the C-terminal is stimulated by binding CC chemokines especially by APO-RANTES. Post-translationally, O-glycosylated, but not N-glycosylated. Ser-6 appears to be the major site even if Ser-7 may be also O-glycosylated. Also sialylated glycans present which contribute to chemokine binding. Thr-16 and Ser-17 may also be glycosylated and, if so, with small moieties such as a T-antigen.

Its subcellular location is the cell membrane. Functionally, receptor for a number of inflammatory CC-chemokines including CCL3/MIP-1-alpha, CCL4/MIP-1-beta and RANTES and subsequently transduces a signal by increasing the intracellular calcium ion level. May play a role in the control of granulocytic lineage proliferation or differentiation. Participates in T-lymphocyte migration to the infection site by acting as a chemotactic receptor. In Trachypithecus francoisi (Francois' leaf monkey), this protein is C-C chemokine receptor type 5 (CCR5).